Reading from the N-terminus, the 127-residue chain is Large ribosomal subunit protein eL32 (127 aa).

Residues 38-48 (WRRPKGIDSKM) show a composition bias toward basic and acidic residues. The segment at 38–66 (WRRPKGIDSKMRLKKKGKPRSPSIGWSSP) is disordered.

This sequence belongs to the eukaryotic ribosomal protein eL32 family.

The protein is Large ribosomal subunit protein eL32 of Thermococcus gammatolerans (strain DSM 15229 / JCM 11827 / EJ3).